A 96-amino-acid chain; its full sequence is uncharacterized protein (96 aa).

This is an uncharacterized protein from Bacillus subtilis (strain 168).